The chain runs to 360 residues: Cyclin-dependent kinase 7 (360 aa).

The region spanning 4–288 (YNIEALIGEG…AADALNHPYF (285 aa)) is the Protein kinase domain. ATP is bound by residues 10–18 (IGEGTYGVV) and Lys33. The active-site Proton acceptor is Asp130. A phosphoserine mark is found at Ser157 and Ser163. Positions 333-342 (QQQQQQIQSQ) are enriched in low complexity. Residues 333-360 (QQQQQQIQSQPEPIQVDNVEQTQQAQQV) are disordered. Residues 350 to 360 (NVEQTQQAQQV) are compositionally biased toward polar residues.

This sequence belongs to the protein kinase superfamily. CMGC Ser/Thr protein kinase family. CDC2/CDKX subfamily. As to quaternary structure, probably associates with cyclin H and mat1 to form a multimeric active enzyme.

The protein localises to the nucleus. The catalysed reaction is L-seryl-[protein] + ATP = O-phospho-L-seryl-[protein] + ADP + H(+). It catalyses the reaction L-threonyl-[protein] + ATP = O-phospho-L-threonyl-[protein] + ADP + H(+). The enzyme catalyses [DNA-directed RNA polymerase] + ATP = phospho-[DNA-directed RNA polymerase] + ADP + H(+). Its function is as follows. Catalytic part of CAK which activates cyclin-associated CDK1/CDK2/CDK4 by threonine phosphorylation, thereby allowing MPF activation. The chain is Cyclin-dependent kinase 7 (cdk7) from Dictyostelium discoideum (Social amoeba).